The chain runs to 291 residues: Lipoyl synthase 1 (291 aa).

The [4Fe-4S] cluster site is built by cysteine 34, cysteine 39, cysteine 45, cysteine 60, cysteine 64, cysteine 67, and serine 274. One can recognise a Radical SAM core domain in the interval 46-263 (FQAGTATFLI…QVYGEELGFL (218 aa)).

The protein belongs to the radical SAM superfamily. Lipoyl synthase family. It depends on [4Fe-4S] cluster as a cofactor.

Its subcellular location is the cytoplasm. It carries out the reaction [[Fe-S] cluster scaffold protein carrying a second [4Fe-4S](2+) cluster] + N(6)-octanoyl-L-lysyl-[protein] + 2 oxidized [2Fe-2S]-[ferredoxin] + 2 S-adenosyl-L-methionine + 4 H(+) = [[Fe-S] cluster scaffold protein] + N(6)-[(R)-dihydrolipoyl]-L-lysyl-[protein] + 4 Fe(3+) + 2 hydrogen sulfide + 2 5'-deoxyadenosine + 2 L-methionine + 2 reduced [2Fe-2S]-[ferredoxin]. It participates in protein modification; protein lipoylation via endogenous pathway; protein N(6)-(lipoyl)lysine from octanoyl-[acyl-carrier-protein]: step 2/2. Catalyzes the radical-mediated insertion of two sulfur atoms into the C-6 and C-8 positions of the octanoyl moiety bound to the lipoyl domains of lipoate-dependent enzymes, thereby converting the octanoylated domains into lipoylated derivatives. The chain is Lipoyl synthase 1 from Nostoc sp. (strain PCC 7120 / SAG 25.82 / UTEX 2576).